A 433-amino-acid chain; its full sequence is Protoheme IX farnesyltransferase 2 (433 aa).

The interval 1–164 (MQRFTGLVTA…LTKPRLMWLL (164 aa)) is unknown. 13 helical membrane passes run 4-24 (FTGL…LGVA), 35-55 (AVAH…AAAL), 67-87 (WGVT…MAVL), 95-115 (LHLF…TWHL), 160-180 (LMWL…VTGA), 184-204 (GVTI…AGTF), 236-256 (AFGV…VNPL), 257-277 (AAAL…VVLK), 282-304 (WNTV…AVAG), 308-330 (LPAL…NLAI), 357-377 (ILYW…VAGF), 378-398 (GPVY…TVVV), and 413-433 (HASN…TMVI). A protoheme IX prenyltransferase region spans residues 165-430 (CLLALSGMAL…ALLVAILVET (266 aa)).

In the C-terminal section; belongs to the UbiA prenyltransferase family. Protoheme IX farnesyltransferase subfamily.

The protein resides in the cell membrane. It catalyses the reaction heme b + (2E,6E)-farnesyl diphosphate + H2O = Fe(II)-heme o + diphosphate. The protein operates within porphyrin-containing compound metabolism; heme O biosynthesis; heme O from protoheme: step 1/1. Converts heme B (protoheme IX) to heme O by substitution of the vinyl group on carbon 2 of heme B porphyrin ring with a hydroxyethyl farnesyl side group. This chain is Protoheme IX farnesyltransferase 2 (ctaB2), found in Natronomonas pharaonis (strain ATCC 35678 / DSM 2160 / CIP 103997 / JCM 8858 / NBRC 14720 / NCIMB 2260 / Gabara) (Halobacterium pharaonis).